The primary structure comprises 532 residues: 2,3-bisphosphoglycerate-independent phosphoglycerate mutase (532 aa).

Mn(2+) contacts are provided by D15 and S65. S65 functions as the Phosphoserine intermediate in the catalytic mechanism. Substrate is bound by residues H126, 156 to 157 (RD), R188, R194, 258 to 261 (RPDR), and K331. Positions 398, 402, 439, 440, and 457 each coordinate Mn(2+).

The protein belongs to the BPG-independent phosphoglycerate mutase family. Monomer. The cofactor is Mn(2+).

The enzyme catalyses (2R)-2-phosphoglycerate = (2R)-3-phosphoglycerate. The protein operates within carbohydrate degradation; glycolysis; pyruvate from D-glyceraldehyde 3-phosphate: step 3/5. Catalyzes the interconversion of 2-phosphoglycerate and 3-phosphoglycerate. The polypeptide is 2,3-bisphosphoglycerate-independent phosphoglycerate mutase (Gloeothece citriformis (strain PCC 7424) (Cyanothece sp. (strain PCC 7424))).